The chain runs to 595 residues: Outer dynein arm-docking complex subunit 3 (595 aa).

The segment at 1–69 (MTSPLCRAAS…RGAGKPSVHS (69 aa)) is disordered. Coiled coils occupy residues 94–327 (WNIK…REHL) and 385–473 (FAQL…ASKL).

In terms of assembly, component of the outer dynein arm-docking complex along with ODAD1, ODAD2, ODAD4 and CLXN. Interacts with ODAD1. Interacts with PIERCE1 and PIERCE2; the interactions link the outer dynein arms docking complex (ODA-DC) to the internal microtubule inner proteins (MIP) in cilium axoneme.

The protein resides in the cytoplasm. It is found in the cytoskeleton. Its subcellular location is the cilium basal body. It localises to the microtubule organizing center. The protein localises to the centrosome. The protein resides in the centriole. It is found in the cilium axoneme. Its function is as follows. Component of the outer dynein arm-docking complex (ODA-DC) that mediates outer dynein arms (ODA) binding onto the doublet microtubule. Involved in mediating assembly of both ODAs and their axonemal docking complex onto ciliary microtubules. The sequence is that of Outer dynein arm-docking complex subunit 3 from Homo sapiens (Human).